The following is a 314-amino-acid chain: 3'-5' exoribonuclease YhaM (314 aa).

Residues 163–279 form the HD domain; it reads HVVSMLNLAK…LHYIDNLDAK (117 aa).

This sequence belongs to the YhaM family.

In terms of biological role, shows a 3'-5' exoribonuclease activity. This chain is 3'-5' exoribonuclease YhaM, found in Bacillus velezensis (strain DSM 23117 / BGSC 10A6 / LMG 26770 / FZB42) (Bacillus amyloliquefaciens subsp. plantarum).